Reading from the N-terminus, the 130-residue chain is D-ribose pyranase (130 aa).

Residue H20 is the Proton donor of the active site. Substrate contacts are provided by residues D28, H97, and 119-121 (YAN).

This sequence belongs to the RbsD / FucU family. RbsD subfamily. In terms of assembly, homodecamer.

It localises to the cytoplasm. The catalysed reaction is beta-D-ribopyranose = beta-D-ribofuranose. The protein operates within carbohydrate metabolism; D-ribose degradation; D-ribose 5-phosphate from beta-D-ribopyranose: step 1/2. Functionally, catalyzes the interconversion of beta-pyran and beta-furan forms of D-ribose. The sequence is that of D-ribose pyranase from Paracidovorax citrulli (strain AAC00-1) (Acidovorax citrulli).